The chain runs to 373 residues: uncharacterized protein (373 aa).

Belongs to the glycosyltransferase 28 family.

This is an uncharacterized protein from Bacillus subtilis (strain 168).